Here is a 74-residue protein sequence, read N- to C-terminus: ATP synthase subunit c (74 aa).

2 consecutive transmembrane segments (helical) span residues 8–28 (FIGI…VSNI) and 52–72 (IGAG…MLLI).

This sequence belongs to the ATPase C chain family. As to quaternary structure, F-type ATPases have 2 components, F(1) - the catalytic core - and F(0) - the membrane proton channel. F(1) has five subunits: alpha(3), beta(3), gamma(1), delta(1), epsilon(1). F(0) has three main subunits: a(1), b(2) and c(10-14). The alpha and beta chains form an alternating ring which encloses part of the gamma chain. F(1) is attached to F(0) by a central stalk formed by the gamma and epsilon chains, while a peripheral stalk is formed by the delta and b chains.

The protein resides in the cell inner membrane. F(1)F(0) ATP synthase produces ATP from ADP in the presence of a proton or sodium gradient. F-type ATPases consist of two structural domains, F(1) containing the extramembraneous catalytic core and F(0) containing the membrane proton channel, linked together by a central stalk and a peripheral stalk. During catalysis, ATP synthesis in the catalytic domain of F(1) is coupled via a rotary mechanism of the central stalk subunits to proton translocation. Its function is as follows. Key component of the F(0) channel; it plays a direct role in translocation across the membrane. A homomeric c-ring of between 10-14 subunits forms the central stalk rotor element with the F(1) delta and epsilon subunits. The sequence is that of ATP synthase subunit c from Rickettsia akari (strain Hartford).